The primary structure comprises 253 residues: 1-(5-phosphoribosyl)-5-[(5-phosphoribosylamino)methylideneamino] imidazole-4-carboxamide isomerase (253 aa).

Aspartate 11 functions as the Proton acceptor in the catalytic mechanism. The active-site Proton donor is the aspartate 132.

This sequence belongs to the HisA/HisF family.

It is found in the cytoplasm. It catalyses the reaction 1-(5-phospho-beta-D-ribosyl)-5-[(5-phospho-beta-D-ribosylamino)methylideneamino]imidazole-4-carboxamide = 5-[(5-phospho-1-deoxy-D-ribulos-1-ylimino)methylamino]-1-(5-phospho-beta-D-ribosyl)imidazole-4-carboxamide. The protein operates within amino-acid biosynthesis; L-histidine biosynthesis; L-histidine from 5-phospho-alpha-D-ribose 1-diphosphate: step 4/9. This chain is 1-(5-phosphoribosyl)-5-[(5-phosphoribosylamino)methylideneamino] imidazole-4-carboxamide isomerase, found in Methylobacterium nodulans (strain LMG 21967 / CNCM I-2342 / ORS 2060).